The chain runs to 505 residues: Maturase K (505 aa).

Belongs to the intron maturase 2 family. MatK subfamily.

It is found in the plastid. Its subcellular location is the chloroplast. Usually encoded in the trnK tRNA gene intron. Probably assists in splicing its own and other chloroplast group II introns. The chain is Maturase K from Sciadopitys verticillata (Japanese umbrella-pine).